Consider the following 678-residue polypeptide: Putative cyclic nucleotide-gated ion channel 15 (678 aa).

Residues 1–81 (MGYGNSRSVR…RGQTIRRWNK (81 aa)) are Cytoplasmic-facing. Residues 82-102 (IFLIACLVSLFVDPLFFFLPV) form a helical membrane-spanning segment. Residues 103–115 (MRNEACITIGVRL) are Extracellular-facing. The helical transmembrane segment at 116–136 (EVVLTLIRSLADAFYIAQILI) threads the bilayer. At 137 to 170 (RFRTAYIAPPSRVFGRGELVIDSRKIAWRYLHKS) the chain is on the cytoplasmic side. Residues 171 to 191 (FWIHLVAALPLPQVLIWIIIP) traverse the membrane as a helical segment. Topologically, residues 192–203 (NLRGSPMTNTKN) are extracellular. Residues 204 to 224 (VLRFIIIFQYVPRMFLIFPLS) traverse the membrane as a helical segment. At 225–245 (RQIIKATGVVTETAWAGAAYN) the chain is on the cytoplasmic side. The chain crosses the membrane as a helical span at residues 246-266 (LMLYMLASHVLGACWYLLAVE). Residues 267-364 (RQEACWRHAC…GQNLATSTYA (98 aa)) lie on the Extracellular side of the membrane. The helical transmembrane segment at 365–385 (GEILFAIIIATLGLVLFALLI) threads the bilayer. At 386-678 (GNMQTYLQST…KPVEPDFSSE (293 aa)) the chain is on the cytoplasmic side. Residues 471–595 (LFDQ…TKQL) and E542 each bind a nucleoside 3',5'-cyclic phosphate. Residues 587 to 602 (FRRLHTKQLRHKFRFY) form a calmodulin-binding region. Residues 607 to 638 (RTWAACFIQAAWRRHRKRKYKTELRAKEEFHY) enclose the IQ domain. Over residues 656–668 (RSGSDSGMMSSIQ) the composition is skewed to polar residues. Residues 656–678 (RSGSDSGMMSSIQKPVEPDFSSE) are disordered.

This sequence belongs to the cyclic nucleotide-gated cation channel (TC 1.A.1.5) family. In terms of assembly, homotetramer or heterotetramer.

Its subcellular location is the cell membrane. Putative cyclic nucleotide-gated ion channel. This chain is Putative cyclic nucleotide-gated ion channel 15 (CNGC15), found in Arabidopsis thaliana (Mouse-ear cress).